The following is a 477-amino-acid chain: MKRSILLAIIAFLQFFTSYGQYDWDNVPIPANAGAGKTWKLQTAASDDFNYTFNPTNNVVDFGPNGNMKWYNKYHNRPNGQPNNFEGPGPTKWMQNHVAVSGGNLNIWASRIPGATKSFTGSNNTPISRPETRAGCITNKTRVKYPVFVEARVKVMNSTLASDIWLLSPDDTQEIDIMECYGGPGNDNRNSYFASKIHLSHHVFIRPPNFKDYQPADLNSWWGKNGVTQWGGKTIRIGVNWVSPTRLEYFVDGQMVRILDNDAVQTRLADGTWQYTYPAGVTSTGVNGQLIKENGYQKMNIASSLSDAKNKSNISVIDPFNYLNNGRKFSKEMDIIINVEDQSWQAEAYRSPNAAEMANFYDNNLLVDWIRVYKPVNASAANSAETTSTVEKPASFEPQGQPTEKLQVYPVPATDVLNISQSDYVEARVYNLKGWVMLRKDVIDQKIDVSSLKKGIYILEITKATGETVKQKIVISE.

An N-terminal signal peptide occupies residues 1-20 (MKRSILLAIIAFLQFFTSYG). One can recognise a GH16 domain in the interval 22-378 (YDWDNVPIPA…WIRVYKPVNA (357 aa)). Residues 94-104 (MQNHVAVSGGN), 123-125 (NNT), Glu-174, Glu-179, Arg-206, and Glu-340 contribute to the substrate site. Glu-174 functions as the Nucleophile in the catalytic mechanism. Catalysis depends on Glu-179, which acts as the Proton donor. The span at 382 to 391 (NSAETTSTVE) shows a compositional bias: low complexity. Residues 382 to 402 (NSAETTSTVEKPASFEPQGQP) form a disordered region.

This sequence belongs to the glycosyl hydrolase 16 family.

The protein localises to the secreted. It carries out the reaction Hydrolysis of (1-&gt;4)-beta-D-galactosidic linkages in agarose, giving the tetramer as the predominant product.. Cleaves the beta-1,4-linkages between beta-D-galactose and alpha-L-3,6-anhydro-galactose residues in agarose. Cleaves agarose in a random manner with retention of the anomeric-bond configuration, producing beta-anomers that give rise progressively to alpha-anomers when mutarotation takes place. Requires at least 4 consecutive agarose units and is highly intolerant to modifications. This Zobellia galactanivorans (strain DSM 12802 / CCUG 47099 / CIP 106680 / NCIMB 13871 / Dsij) protein is Beta-agarase D (agaD).